Here is a 340-residue protein sequence, read N- to C-terminus: UDP-3-O-(3-hydroxymyristoyl)glucosamine N-acyltransferase (340 aa).

His239 serves as the catalytic Proton acceptor.

The protein belongs to the transferase hexapeptide repeat family. LpxD subfamily. In terms of assembly, homotrimer.

The catalysed reaction is a UDP-3-O-[(3R)-3-hydroxyacyl]-alpha-D-glucosamine + a (3R)-hydroxyacyl-[ACP] = a UDP-2-N,3-O-bis[(3R)-3-hydroxyacyl]-alpha-D-glucosamine + holo-[ACP] + H(+). The enzyme catalyses UDP-3-O-[(3R)-3-hydroxytetradecanoyl]-alpha-D-glucosamine + (3R)-hydroxytetradecanoyl-[ACP] = UDP-2-N,3-O-bis[(3R)-3-hydroxytetradecanoyl]-alpha-D-glucosamine + holo-[ACP] + H(+). It functions in the pathway glycolipid biosynthesis; lipid IV(A) biosynthesis; lipid IV(A) from (3R)-3-hydroxytetradecanoyl-[acyl-carrier-protein] and UDP-N-acetyl-alpha-D-glucosamine: step 3/6. Its function is as follows. Catalyzes the N-acylation of UDP-3-O-(hydroxytetradecanoyl)glucosamine using 3-hydroxytetradecanoyl-ACP as the acyl donor. Is involved in the biosynthesis of lipid A, a phosphorylated glycolipid that anchors the lipopolysaccharide to the outer membrane of the cell. The chain is UDP-3-O-(3-hydroxymyristoyl)glucosamine N-acyltransferase from Sodalis glossinidius (strain morsitans).